A 202-amino-acid polypeptide reads, in one-letter code: Syndecan-2 (202 aa).

The first 18 residues, 1–18, serve as a signal peptide directing secretion; that stretch reads MQRAWILLTLGLMACVSA. Residues 19–145 are Extracellular-facing; it reads ETRTELTSDK…HSDNLFKRTE (127 aa). O-linked (Xyl...) (glycosaminoglycan) serine glycosylation is found at serine 41, serine 55, and serine 57. 2 disordered regions span residues 41-63 and 88-118; these read SGVY…DEDI and ETMT…ISEA. The segment covering 91-103 has biased composition (polar residues); that stretch reads TLKTQSITPAQTE. Residues 104–117 show a composition bias toward acidic residues; sequence SPEETDKEEVDISE. A Phosphoserine modification is found at serine 116. The helical transmembrane segment at 146-170 threads the bilayer; the sequence is VLAAVIAGGVIGFLFAIFLILLLVY. Topologically, residues 171–202 are cytoplasmic; the sequence is RMRKKDEGSYDLGERKPSSAAYQKAPTKEFYA. Residues 179 to 202 form a disordered region; that stretch reads SYDLGERKPSSAAYQKAPTKEFYA. At serine 188 the chain carries Phosphoserine.

It belongs to the syndecan proteoglycan family. In terms of assembly, interacts (via cytoplasmic domain) with SARM1. Forms a complex with SDCBP and PDCD6IP. Post-translationally, O-glycosylated; contains both heparan sulfate and chondroitin sulfate. Phosphorylated on serine residues. In terms of tissue distribution, preferential expression in cells of mesenchymal origin.

The protein resides in the membrane. Functionally, cell surface proteoglycan which regulates dendritic arbor morphogenesis. The protein is Syndecan-2 (Sdc2) of Mus musculus (Mouse).